The following is a 342-amino-acid chain: Protein BASIC PENTACYSTEINE6 (342 aa).

Residues 41–67 (AIQERNLAISEKKAAVAERDMAFLQRD) are a coiled coil. The segment at 41–76 (AIQERNLAISEKKAAVAERDMAFLQRDTAIAERNNA) is alanine-zipper. The disordered stretch occupies residues 143-199 (REMEPNDGLPTSPPAGSTLESAKPKRGKRVNPKATTQTAANKRGPKNQRKVKKESED). The tract at residues 164–195 (AKPKRGKRVNPKATTQTAANKRGPKNQRKVKK) is required for nucleus and nucleolus localization. A compositionally biased stretch (basic residues) spans 185–194 (RGPKNQRKVK). Residues 192–195 (KVKK) carry the Nuclear localization signal motif.

This sequence belongs to the BBR/BPC family. As to quaternary structure, homodimer. Heterodimer with BPC4. In terms of tissue distribution, expressed in seedlings, leaves and pistils. Detected in the base of flowers and tips of carpels, in sepal vasculature, in young rosette, in the lateral and tip of primary roots, and in ovule at the exception of the outer integument.

The protein localises to the nucleus. Its subcellular location is the nucleolus. Transcriptional regulator that specifically binds to GA-rich elements (GAGA-repeats) present in regulatory sequences of genes involved in developmental processes. The polypeptide is Protein BASIC PENTACYSTEINE6 (BPC6) (Arabidopsis thaliana (Mouse-ear cress)).